The following is a 312-amino-acid chain: Taste receptor type 2 member 103 (312 aa).

Topologically, residues 1–6 (MVLTIR) are extracellular. The helical transmembrane segment at 7 to 27 (AILWVTLITIISLEFIIGILG) threads the bilayer. At 28 to 61 (NVFIALVNIIDWVKRGKISAVDKTYMALAISRTA) the chain is on the cytoplasmic side. The chain crosses the membrane as a helical span at residues 62–82 (FLLSLITGFLVSLLDPALLGM). The Extracellular segment spans residues 83-92 (RTMVRLLTIS). The chain crosses the membrane as a helical span at residues 93–113 (WMVTNHFSVWFATCLSIFYFL). Residues 114-132 (KIANFSNSIFLVLKWEAKK) lie on the Cytoplasmic side of the membrane. The chain crosses the membrane as a helical span at residues 133-153 (VVSVTLVVSVIILIMNIIVIN). Residues 154–185 (KFTDRLQVNTLQNCSTSNTLKDYGLFLFISTG) are Extracellular-facing. N-linked (GlcNAc...) asparagine glycosylation occurs at N166. A helical transmembrane segment spans residues 186-206 (FTLTPFAVSLTMFLLLIFSLW). Topologically, residues 207 to 229 (RHLKNMCHSATGSRDVSTVAHIK) are cytoplasmic. The helical transmembrane segment at 230-250 (GLQTVVTFLLLYTAFVMSLLS) threads the bilayer. Residues 251-264 (ESLNINIQHTNLLS) lie on the Extracellular side of the membrane. The chain crosses the membrane as a helical span at residues 265–285 (HFLRSIGVAFPTGHSCVLILG). At 286 to 312 (NSKLRQASLSVILWLRYKYKHIENWGP) the chain is on the cytoplasmic side.

Belongs to the G-protein coupled receptor T2R family. As to expression, expressed in subsets of taste receptor cells of the tongue and palate epithelium and exclusively in gustducin-positive cells. Expressed in 15% taste bud cells in circumvallate and foliate papillae but only in 2% in fungiform papillae.

The protein resides in the membrane. In terms of biological role, gustducin-coupled receptor implicated in the perception of bitter compounds in the oral cavity and the gastrointestinal tract. Signals through PLCB2 and the calcium-regulated cation channel TRPM5. The protein is Taste receptor type 2 member 103 (Tas2r103) of Mus musculus (Mouse).